The primary structure comprises 380 residues: Pectinesterase QRT1 (380 aa).

The N-terminal stretch at 1–26 is a signal peptide; that stretch reads MKVEAFIPAVLLLCFGVMLCLKSSCA. 2 N-linked (GlcNAc...) asparagine glycosylation sites follow: Asn74 and Asn137. 2 residues coordinate substrate: Thr164 and Gln198. The Proton donor role is filled by Asp221. Asn227 carries an N-linked (GlcNAc...) asparagine glycan. Cys235 and Cys255 are joined by a disulfide. Residue Asp242 is the Nucleophile of the active site. Substrate-binding residues include Arg298 and Trp300. N-linked (GlcNAc...) asparagine glycosylation is present at Asn302.

The protein belongs to the pectinesterase family. As to expression, expressed in flower buds, siliques, developing guard cells, floral nectares, at the stigmatic surface, in the hypocotyl-root transition zone and the area of lateral root emergence. Not expressed in mature leaves.

The protein localises to the secreted. It is found in the cell wall. The catalysed reaction is [(1-&gt;4)-alpha-D-galacturonosyl methyl ester](n) + n H2O = [(1-&gt;4)-alpha-D-galacturonosyl](n) + n methanol + n H(+). Its pathway is glycan metabolism; pectin degradation; 2-dehydro-3-deoxy-D-gluconate from pectin: step 1/5. Functionally, pectinesterase required for cell type-specific pectin degradation to separate microspores. The sequence is that of Pectinesterase QRT1 from Arabidopsis thaliana (Mouse-ear cress).